Here is a 208-residue protein sequence, read N- to C-terminus: MSLHIADHPLVKHKLGLMRQNDISTKDFRALASEIARLLTYEAVKDLPTEKHIVDGWAGPVEVDRLKGKKITIVPILRAGLGMMDGVIDLIPSAKVTVVGFYRDEETLEPVEYYVKTASEMSERVALIIDPMLATGGTLIATIDTLKKAGSKKIKGLFLVAAPEGIKKVQDAHPDVEIYVAAVDERLNEAGYILPGLGDAGDKIFGTR.

5-phospho-alpha-D-ribose 1-diphosphate-binding positions include Arg78, Arg103, and 130 to 138 (DPMLATGGT). Residues Ile193 and 198–200 (GDA) each bind uracil. Asp199 contributes to the 5-phospho-alpha-D-ribose 1-diphosphate binding site.

This sequence belongs to the UPRTase family. Requires Mg(2+) as cofactor.

It catalyses the reaction UMP + diphosphate = 5-phospho-alpha-D-ribose 1-diphosphate + uracil. It functions in the pathway pyrimidine metabolism; UMP biosynthesis via salvage pathway; UMP from uracil: step 1/1. Its activity is regulated as follows. Allosterically activated by GTP. Catalyzes the conversion of uracil and 5-phospho-alpha-D-ribose 1-diphosphate (PRPP) to UMP and diphosphate. This is Uracil phosphoribosyltransferase from Desulfotalea psychrophila (strain LSv54 / DSM 12343).